The chain runs to 209 residues: ATP-dependent Clp protease proteolytic subunit 2 (209 aa).

The Nucleophile role is filled by serine 107. Residue histidine 132 is part of the active site.

This sequence belongs to the peptidase S14 family. In terms of assembly, fourteen ClpP subunits assemble into 2 heptameric rings which stack back to back to give a disk-like structure with a central cavity, resembling the structure of eukaryotic proteasomes.

Its subcellular location is the cytoplasm. It carries out the reaction Hydrolysis of proteins to small peptides in the presence of ATP and magnesium. alpha-casein is the usual test substrate. In the absence of ATP, only oligopeptides shorter than five residues are hydrolyzed (such as succinyl-Leu-Tyr-|-NHMec, and Leu-Tyr-Leu-|-Tyr-Trp, in which cleavage of the -Tyr-|-Leu- and -Tyr-|-Trp bonds also occurs).. Functionally, cleaves peptides in various proteins in a process that requires ATP hydrolysis. Has a chymotrypsin-like activity. Plays a major role in the degradation of misfolded proteins. In Corynebacterium jeikeium (strain K411), this protein is ATP-dependent Clp protease proteolytic subunit 2.